The primary structure comprises 215 residues: Ribonuclease (215 aa).

The signal sequence occupies residues 1–22 (MKKIVVLLGMLLAPWFSSAVQA). Catalysis depends on residues His62, Glu102, and His106. The tract at residues 144–166 (KPLPAQGGSGQCQRLAGPGQHHG) is disordered.

The protein belongs to the RNase T2 family.

The protein localises to the periplasm. It is found in the cytoplasm. Its function is as follows. One of the few RNases that cleave the phosphodiester bond between any two nucleotide. Shows a preference for adenylic acid. This Aeromonas hydrophila protein is Ribonuclease.